A 104-amino-acid chain; its full sequence is Small ribosomal subunit protein uS10 (104 aa).

This sequence belongs to the universal ribosomal protein uS10 family. In terms of assembly, part of the 30S ribosomal subunit.

Functionally, involved in the binding of tRNA to the ribosomes. In Helicobacter pylori (strain J99 / ATCC 700824) (Campylobacter pylori J99), this protein is Small ribosomal subunit protein uS10.